We begin with the raw amino-acid sequence, 464 residues long: Leucine-rich repeat-containing protein 34 (464 aa).

The segment at 1-48 (MAAQPPRPVGERSMGSSREAARAPARSPAWASTQASTPGAALAVQRES) is disordered. Residues 16 to 32 (SSREAARAPARSPAWAS) are compositionally biased toward low complexity. LRR repeat units lie at residues 295–315 (SLRY…VYLA) and 323–345 (TLEV…LSET).

Interacts with NPM1 and NCL.

Its subcellular location is the nucleus. It localises to the nucleolus. The protein localises to the cytoplasm. Functionally, highly expressed in stem cells where it may be involved in regulation of pluripotency. In embryonic stem cells (ESCs), important for normal expression of the pluripotency regulators POU5F1/OCT4 and KLF4. Also important for expression of the ectodermal marker gene NES and the endodermal marker gene GATA4. Promotes stem cell proliferation in vitro. The protein is Leucine-rich repeat-containing protein 34 (LRRC34) of Homo sapiens (Human).